Consider the following 236-residue polypeptide: N-acetyl-alpha-D-glucosaminyl L-malate deacetylase 1 (236 aa).

Histidine 12, aspartate 15, and histidine 113 together coordinate Zn(2+).

This sequence belongs to the PIGL family. It depends on Zn(2+) as a cofactor.

The catalysed reaction is (S)-malyl N-acetyl-alpha-D-glucosaminide + H2O = (S)-malyl alpha-D-glucosaminide + acetate. Involved in bacillithiol (BSH) biosynthesis. Catalyzes the second step of the pathway, the deacetylation of N-acetylglucosaminylmalate (GlcNAc-Mal) to glucosamine malate (GlcN-Mal). This is N-acetyl-alpha-D-glucosaminyl L-malate deacetylase 1 from Bacillus subtilis (strain 168).